The sequence spans 189 residues: MKILANAIREGNILEYQNNLWIVSKKPDHTKPGKGGAYIQLEMKNLKTGTKIYERFSSSDYLEKATLEQRNYQYLYQENNHLVLMDLESFEQILVQKSIIASNKLPFLLENTVVTVETYKDEPIRLVLPHTVVVEILETSPNIKGATVTASYKPAILSNGAKIMVPPYLSAGEKIVVKLEDISFVERAK.

The protein belongs to the elongation factor P family.

Its subcellular location is the cytoplasm. The protein operates within protein biosynthesis; polypeptide chain elongation. In terms of biological role, involved in peptide bond synthesis. Stimulates efficient translation and peptide-bond synthesis on native or reconstituted 70S ribosomes in vitro. Probably functions indirectly by altering the affinity of the ribosome for aminoacyl-tRNA, thus increasing their reactivity as acceptors for peptidyl transferase. This Orientia tsutsugamushi (strain Boryong) (Rickettsia tsutsugamushi) protein is Elongation factor P.